We begin with the raw amino-acid sequence, 164 residues long: Peroxynitrite isomerase (164 aa).

The GXWXGXG signature appears at 21-27 (GRWGGRG). Heme b is bound by residues K130 and H156.

Belongs to the nitrobindin family. As to quaternary structure, homodimer. It depends on heme b as a cofactor.

It catalyses the reaction peroxynitrite = nitrate. The protein operates within nitrogen metabolism. Heme-binding protein able to scavenge peroxynitrite and to protect free L-tyrosine against peroxynitrite-mediated nitration, by acting as a peroxynitrite isomerase that converts peroxynitrite to nitrate. Therefore, this protein likely plays a role in peroxynitrite sensing and in the detoxification of reactive nitrogen and oxygen species (RNS and ROS, respectively). Is able to bind nitric oxide (NO) in vitro, but may act as a sensor of peroxynitrite levels in vivo. The chain is Peroxynitrite isomerase from Nocardioides sp. (strain ATCC BAA-499 / JS614).